Reading from the N-terminus, the 492-residue chain is Serine incorporator 4 (492 aa).

Transmembrane regions (helical) follow at residues 58 to 78, 113 to 133, 148 to 168, 179 to 199, 217 to 237, 254 to 274, 281 to 301, 330 to 350, 421 to 441, and 464 to 484; these read FYIL…SKTV, AVYR…VLLV, SFWS…FCIP, IGIC…TAFA, FLGV…GAVL, LLSL…APCI, SGLL…FSAL, IPDA…VLFA, GFHF…TNWF, and VASC…PLLA.

The protein belongs to the TDE1 family.

It localises to the membrane. Functionally, incorporates a polar amino acid serine into membranes and facilitates the synthesis of two serine-derived lipids, phosphatidylserine and sphingolipids. The protein is Serine incorporator 4 (Serinc4) of Rattus norvegicus (Rat).